Here is a 296-residue protein sequence, read N- to C-terminus: Tyrosine recombinase XerC (296 aa).

The 84-residue stretch at M1 to M84 folds into the Core-binding (CB) domain. Positions Y105–L286 constitute a Tyr recombinase domain. Active-site residues include R145, K169, H238, R241, and H264. The active-site O-(3'-phospho-DNA)-tyrosine intermediate is the Y273.

The protein belongs to the 'phage' integrase family. XerC subfamily. In terms of assembly, forms a cyclic heterotetrameric complex composed of two molecules of XerC and two molecules of XerD.

It localises to the cytoplasm. Functionally, site-specific tyrosine recombinase, which acts by catalyzing the cutting and rejoining of the recombining DNA molecules. The XerC-XerD complex is essential to convert dimers of the bacterial chromosome into monomers to permit their segregation at cell division. It also contributes to the segregational stability of plasmids. The sequence is that of Tyrosine recombinase XerC from Staphylococcus carnosus (strain TM300).